A 189-amino-acid chain; its full sequence is MSVISANPWLMLLAIFVINVAYVTCLTVRTILTLKGYRYVAAAVSFIEVLIYIIGLGLVMANLDKFQNIIAYALGFSVGIIVGMKIEEKLALGYSVVNVTTANYELDLPTQLRNLGYGVTHFPAYGRDGERLVMQILTPRRFELKLMDTIKQIDEKAFVIAYEARTLHGGFWVKGVRSKKLKAYDTDEI.

The next 3 helical transmembrane spans lie at 8–28 (PWLM…CLTV), 40–60 (VAAA…GLVM), and 66–86 (FQNI…GMKI).

It belongs to the UPF0316 family.

The protein localises to the cell membrane. The sequence is that of UPF0316 protein Sca_1484 from Staphylococcus carnosus (strain TM300).